A 299-amino-acid chain; its full sequence is NmrA-like family domain-containing protein 1 (299 aa).

NADP(+) contacts are provided by residues 11–16 (GATGAQ), 37–41 (RDPGQ), 58–59 (DQ), 79–81 (TNY), lysine 92, lysine 133, and 155–158 (YFEN). The tract at residues 153–189 (PCYFENLLSYFLPQKAPDGRSYLLSLPMGDVPIDGMS) is interaction with ASS1.

Belongs to the NmrA-type oxidoreductase family. Homodimer. Interacts with ASS1. Interaction is enhanced by low NADPH/NADP(+) ratios, which results in inhibition of ASS1 activity.

It localises to the cytoplasm. The protein resides in the perinuclear region. The protein localises to the nucleus. Redox sensor protein. Undergoes restructuring and subcellular redistribution in response to changes in intracellular NADPH/NADP(+) levels. At low NADPH concentrations the protein is found mainly as a monomer, and binds argininosuccinate synthase (ASS1), the enzyme involved in nitric oxide synthesis. Association with ASS1 impairs its activity and reduces the production of nitric oxide, which subsecuently prevents apoptosis. Under normal NADPH concentrations, the protein is found as a dimer and hides the binding site for ASS1. The homodimer binds one molecule of NADPH. Has higher affinity for NADPH than for NADP(+). Binding to NADPH is necessary to form a stable dimer. The sequence is that of NmrA-like family domain-containing protein 1 (NMRAL1) from Bos taurus (Bovine).